The sequence spans 202 residues: LexA repressor (202 aa).

The segment at residues 28–48 is a DNA-binding region (H-T-H motif); the sequence is RAEIAQRLGFRSPNAAEEHLK. Catalysis depends on for autocatalytic cleavage activity residues Ser-119 and Lys-156.

Belongs to the peptidase S24 family. Homodimer.

It carries out the reaction Hydrolysis of Ala-|-Gly bond in repressor LexA.. Functionally, represses a number of genes involved in the response to DNA damage (SOS response), including recA and lexA. Binds to the 16 bp palindromic sequence 5'-CTGTATATATATACAG-3'. In the presence of single-stranded DNA, RecA interacts with LexA causing an autocatalytic cleavage which disrupts the DNA-binding part of LexA, leading to derepression of the SOS regulon and eventually DNA repair. The protein is LexA repressor of Klebsiella pneumoniae subsp. pneumoniae (strain ATCC 700721 / MGH 78578).